Consider the following 211-residue polypeptide: uncharacterized protein (211 aa).

Over 1–33 the chain is Cytoplasmic; that stretch reads MQNGTEDKSNIPARSNDDVLPPLAVRLTMKVMR. Residues 34 to 54 traverse the membrane as a helical segment; it reads LIFIGKMFAYSFVPFPPFKLL. The Lumenal portion of the chain corresponds to 55–58; sequence TFDN. A helical transmembrane segment spans residues 59–79; the sequence is TVGWFVAYSAIVSIWGFAVWM. Residues 80-116 lie on the Cytoplasmic side of the membrane; that stretch reads ERGYRHKINLLPPRCTKIRCSRCNTRIRSPNWFKYKN. The helical transmembrane segment at 117 to 137 threads the bilayer; that stretch reads WLYFFLLYVSLTTSNLIIQLA. The Lumenal segment spans residues 138–162; that stretch reads SFMTEMSRRGISVPGTKDPGKRDYL. The chain crosses the membrane as a helical span at residues 163–183; it reads GLIIPMRFIGAFIHYMTANLF. Residues 184 to 211 lie on the Cytoplasmic side of the membrane; it reads KEYYLHNGPLEKNDRPSTDEKTSENETL.

The protein localises to the endoplasmic reticulum membrane. This is an uncharacterized protein from Saccharomyces cerevisiae (strain ATCC 204508 / S288c) (Baker's yeast).